A 1153-amino-acid polypeptide reads, in one-letter code: Error-prone DNA polymerase (1153 aa).

Disordered stretches follow at residues 1–39 (MFYS…QAQP) and 64–89 (VGEG…GASQ).

Belongs to the DNA polymerase type-C family. DnaE2 subfamily.

The protein resides in the cytoplasm. It catalyses the reaction DNA(n) + a 2'-deoxyribonucleoside 5'-triphosphate = DNA(n+1) + diphosphate. DNA polymerase involved in damage-induced mutagenesis and translesion synthesis (TLS). It is not the major replicative DNA polymerase. This chain is Error-prone DNA polymerase, found in Corynebacterium jeikeium (strain K411).